Consider the following 86-residue polypeptide: UPF0297 protein SSP1144 (86 aa).

Belongs to the UPF0297 family.

This is UPF0297 protein SSP1144 from Staphylococcus saprophyticus subsp. saprophyticus (strain ATCC 15305 / DSM 20229 / NCIMB 8711 / NCTC 7292 / S-41).